A 268-amino-acid chain; its full sequence is Ribosomal RNA small subunit methyltransferase A (268 aa).

S-adenosyl-L-methionine contacts are provided by Asn-18, Leu-20, Gly-45, Glu-66, Asp-91, and Asn-112.

Belongs to the class I-like SAM-binding methyltransferase superfamily. rRNA adenine N(6)-methyltransferase family. RsmA subfamily.

The protein localises to the cytoplasm. It catalyses the reaction adenosine(1518)/adenosine(1519) in 16S rRNA + 4 S-adenosyl-L-methionine = N(6)-dimethyladenosine(1518)/N(6)-dimethyladenosine(1519) in 16S rRNA + 4 S-adenosyl-L-homocysteine + 4 H(+). Its function is as follows. Specifically dimethylates two adjacent adenosines (A1518 and A1519) in the loop of a conserved hairpin near the 3'-end of 16S rRNA in the 30S particle. May play a critical role in biogenesis of 30S subunits. This is Ribosomal RNA small subunit methyltransferase A from Vibrio vulnificus (strain CMCP6).